We begin with the raw amino-acid sequence, 326 residues long: MVDYYEVLGVQRHASPEDIKKAYRKLALKWHPDKNPENKEEAERKFKQVAEAYEVLSDAKKRDIYDKYGKEGLNGGGGGGSHFDSPFEFGFTFRNPDDVFREFFGGRDPFSFDFFEDPFEDFFGNRRGPRGSRSRGTGSFFSAFSGFPSFGSGFSSFDTGFTSFGSLGHGGLTSFSSTSFGGSGMGNFKSISTSTKMVNGRKITTKRIVENGQERVEVEEDGQLKSLTINGVADDDALAEERMRRGQNALPAQPAGLRPPKPPRPASLLRHAPHCLSEEEGEQDRPRAPGPWDPLASAAGLKEGGKRKKQKQREESKKKKSTKGNH.

Residues 2 to 69 (VDYYEVLGVQ…KKRDIYDKYG (68 aa)) enclose the J domain. The interaction with HSP70 stretch occupies residues 2–146 (VDYYEVLGVQ…TGSFFSAFSG (145 aa)). The interaction with KRT18 stretch occupies residues 119-242 (FEDFFGNRRG…ADDDALAEER (124 aa)). Residue R135 is modified to Omega-N-methylarginine. The segment at 249 to 326 (ALPAQPAGLR…KKKKSTKGNH (78 aa)) is disordered. S277 carries the phosphoserine modification.

As to quaternary structure, homooligomer. Interacts with BAG3, HSPB8 and STUB1. Interacts with ALKBH1. Interacts with HSP70, KRT18 and PTTG. In terms of assembly, interacts with histone deacetylases HDAC4, HDAC6, and SIRT2, HDAC activity is required for antiaggregation. Widely expressed. Highest levels in testis and brain, and lower levels in heart, spleen, intestine, ovary, placenta, lung, kidney, pancreas, thymus, prostate, skeletal muscle, liver and leukocytes. In testis, expressed in germ cells in the earlier stages of differentiation pathway as well as in spermatids. In brain, expressed at a higher level in hippocampus and thalamus and a lower level in amygdala, substantia nigra, corpus callosum and caudate nucleus.

It is found in the cytoplasm. The protein localises to the perinuclear region. It localises to the nucleus. Its subcellular location is the myofibril. The protein resides in the sarcomere. It is found in the z line. In terms of biological role, has a stimulatory effect on the ATPase activity of HSP70 in a dose-dependent and time-dependent manner and hence acts as a co-chaperone of HSP70. Plays an indispensable role in the organization of KRT8/KRT18 filaments. Acts as an endogenous molecular chaperone for neuronal proteins including huntingtin. Suppresses aggregation and toxicity of polyglutamine-containing, aggregation-prone proteins. Also reduces cellular toxicity and caspase-3 activity. Functionally, isoform B but not isoform A inhibits huntingtin aggregation. This Homo sapiens (Human) protein is DnaJ homolog subfamily B member 6 (DNAJB6).